The chain runs to 386 residues: Succinate--CoA ligase [ADP-forming] subunit beta (386 aa).

The ATP-grasp domain maps to 9–244; that stretch reads KELLRDYGVP…LNEEDEKEIE (236 aa). Residues Lys-46, 53–55, Glu-99, Cys-102, and Glu-107 each bind ATP; that span reads GRG. Residues Asn-199 and Asp-213 each contribute to the Mg(2+) site. Substrate is bound by residues Asn-264 and 321–323; that span reads GIM.

This sequence belongs to the succinate/malate CoA ligase beta subunit family. Heterotetramer of two alpha and two beta subunits. Requires Mg(2+) as cofactor.

The catalysed reaction is succinate + ATP + CoA = succinyl-CoA + ADP + phosphate. The enzyme catalyses GTP + succinate + CoA = succinyl-CoA + GDP + phosphate. It participates in carbohydrate metabolism; tricarboxylic acid cycle; succinate from succinyl-CoA (ligase route): step 1/1. Its function is as follows. Succinyl-CoA synthetase functions in the citric acid cycle (TCA), coupling the hydrolysis of succinyl-CoA to the synthesis of either ATP or GTP and thus represents the only step of substrate-level phosphorylation in the TCA. The beta subunit provides nucleotide specificity of the enzyme and binds the substrate succinate, while the binding sites for coenzyme A and phosphate are found in the alpha subunit. The polypeptide is Succinate--CoA ligase [ADP-forming] subunit beta (Alkaliphilus oremlandii (strain OhILAs) (Clostridium oremlandii (strain OhILAs))).